A 652-amino-acid polypeptide reads, in one-letter code: MSGQSLTDRITAAQHSVTGSAVSKTVCKATTHEIMGPKKKHLDYLIQCTNEMNVNIPQLADSLFERTTNSSWVVVFKSLITTHHLMVYGNERFIQYLASRNTLFNLSNFLDKSGLQGYDMSTFIRRYSRYLNEKAVSYRQVAFDFTKVKRGADGVMRTMNTEKLLKTVPIIQNQMDALLDFNVNSNELTNGVINAAFMLLFKDAIRLFAAYNEGIINLLEKYFDMKKNQCKEGLDIYKKFLTRMTRISEFLKVAEQVGIDRGDIPDLSQAPSSLLDALEQHLASLEGKKIKDSTAASRATTLSNAVSSLASTGLSLTKVDEREKQAALEEEQARLKALKEQRLKELAKKPHTSLTTAASPVSTSAGGIMTAPAIDIFSTPSSSNSTSKLPNDLLDLQQPTFHPSVHPMSTASQVASTWGDPFSATVDAVDDAIPSLNPFLTKSSGDVHLSISSDVSTFTTRTPTHEMFVGFTPSPVAQPHPSAGLNVDFESVFGNKSTNVIVDSGGFDELGGLLKPTVASQNQNLPVAKLPPSKLVSDDLDSSLANLVGNLGIGNGTTKNDVNWSQPGEKKLTGGSNWQPKVAPTTAWNAATMAPPVMAYPATTPTGMIGYGIPPQMGSVPVMTQPTLIYSQPVMRPPNPFGPVSGAQIQFM.

N-acetylserine is present on Ser2. The ENTH domain occupies 14-145 (QHSVTGSAVS…VSYRQVAFDF (132 aa)). Ser16 and Ser20 each carry phosphoserine. The tract at residues 221–294 (KYFDMKKNQC…LEGKKIKDST (74 aa)) is interaction with PIMREG. A Glycyl lysine isopeptide (Lys-Gly) (interchain with G-Cter in SUMO2) cross-link involves residue Lys238. Phosphoserine occurs at positions 303 and 315. The tract at residues 559–580 (KNDVNWSQPGEKKLTGGSNWQP) is disordered.

Belongs to the PICALM/SNAP91 family. Binds to clathrin; involves primarily the C-terminal sequences, but the full-length protein is required for full binding capacity. Binds phosphatidylinositol 4,5- bisphosphate. Interacts with PIMREG; this interaction may change the subcellular location into the nucleus. Interacts with AP2A1 (via its alpha-appendage domain). Interacts (via N-terminus) with VAMP2; VAMP3; VAMP7 and VAMP8 (Via N-terminus). Interacts with LC3/MAP1LC3A. In terms of tissue distribution, expressed in all tissues examined.

It localises to the cell membrane. Its subcellular location is the membrane. The protein localises to the clathrin-coated pit. The protein resides in the golgi apparatus. It is found in the cytoplasmic vesicle. It localises to the clathrin-coated vesicle. Its subcellular location is the nucleus. Its function is as follows. Cytoplasmic adapter protein that plays a critical role in clathrin-mediated endocytosis which is important in processes such as internalization of cell receptors, synaptic transmission or removal of apoptotic cells. Recruits AP-2 and attaches clathrin triskelions to the cytoplasmic side of plasma membrane leading to clathrin-coated vesicles (CCVs) assembly. Furthermore, regulates clathrin-coated vesicle size and maturation by directly sensing and driving membrane curvature. In addition to binding to clathrin, mediates the endocytosis of small R-SNARES (Soluble NSF Attachment Protein REceptors) between plasma membranes and endosomes including VAMP2, VAMP3, VAMP4, VAMP7 or VAMP8. In turn, PICALM-dependent SNARE endocytosis is required for the formation and maturation of autophagic precursors. Modulates thereby autophagy and the turnover of autophagy substrates such as MAPT/TAU or amyloid precursor protein cleaved C-terminal fragment (APP-CTF). The polypeptide is Phosphatidylinositol-binding clathrin assembly protein (PICALM) (Homo sapiens (Human)).